The sequence spans 500 residues: Pyruvate kinase 1 (500 aa).

Serine 2 is subject to N-acetylserine. Phosphoserine is present on residues serine 9 and serine 16. Threonine 31 is subject to Phosphothreonine. Residue arginine 49 participates in substrate binding. Positions 51 and 53 each coordinate K(+). ATP is bound at residue 51-54 (NFSH). Serine 70 bears the Phosphoserine mark. Residues aspartate 84 and threonine 85 each contribute to the K(+) site. Arginine 91 contributes to the ATP binding site. Glycyl lysine isopeptide (Lys-Gly) (interchain with G-Cter in URM1) cross-links involve residues lysine 119, lysine 124, lysine 161, lysine 164, and lysine 166. ATP is bound at residue lysine 177. Phosphothreonine is present on threonine 184. Residue lysine 204 forms a Glycyl lysine isopeptide (Lys-Gly) (interchain with G-Cter in ubiquitin) linkage. Serine 213 bears the Phosphoserine mark. Lysine 240 is a binding site for substrate. Glutamate 242 contributes to the Mn(2+) binding site. A Glycyl lysine isopeptide (Lys-Gly) (interchain with G-Cter in ubiquitin) cross-link involves residue lysine 255. Residues glycine 265 and aspartate 266 each contribute to the substrate site. Aspartate 266 serves as a coordination point for Mn(2+). Lysine 292 is covalently cross-linked (Glycyl lysine isopeptide (Lys-Gly) (interchain with G-Cter in URM1)). Threonine 298 contacts substrate. Serine 316 bears the Phosphoserine mark. A Glycyl lysine isopeptide (Lys-Gly) (interchain with G-Cter in URM1) cross-link involves residue lysine 394. Residue 402 to 407 (STSGTT) participates in beta-D-fructose 1,6-bisphosphate binding. The residue at position 418 (cysteine 418) is a Cysteine persulfide. A Glycyl lysine isopeptide (Lys-Gly) (interchain with G-Cter in ubiquitin); alternate cross-link involves residue lysine 446. A Glycyl lysine isopeptide (Lys-Gly) (interchain with G-Cter in URM1); alternate cross-link involves residue lysine 446. Serine 450 is subject to Phosphoserine. Tryptophan 452 and arginine 459 together coordinate beta-D-fructose 1,6-bisphosphate. Threonine 478 is modified (phosphothreonine). A beta-D-fructose 1,6-bisphosphate-binding site is contributed by glycine 484.

This sequence belongs to the pyruvate kinase family. In terms of assembly, homotetramer. Mg(2+) serves as cofactor. Requires K(+) as cofactor. Conjugated to URM1, a ubiquitin-like protein, in response to oxidative stresses. The attachment of URM1 to lysine residues exclusively depends on the presence of a peroxidatic cysteine in the target protein, with low specificity for the particular residue, motif, or structural context at which urmylation can occur. The URM1-conjugation reaction is mechanistically and directly coupled to the process of cysteine persulfidation, transfering the sulfur atom of the URM1 thiocarboxyl group to redox-active cysteine residues in the target protein if it is exposed to oxidative conditions. In terms of processing, persulfidated on specific redox-active cysteine residues. Persulfidation (also called protein S-sulfhydration) may provide a molecular mechanism that enables cells to protect vulnerable cysteine residues from reactive oxygen species (ROS) under stress conditions.

It carries out the reaction pyruvate + ATP = phosphoenolpyruvate + ADP + H(+). The protein operates within carbohydrate degradation; glycolysis; pyruvate from D-glyceraldehyde 3-phosphate: step 5/5. Its activity is regulated as follows. The activity is regulated by glucose levels. Activated by fructose-1,6-bisphosphate. This is Pyruvate kinase 1 (CDC19) from Saccharomyces cerevisiae (strain ATCC 204508 / S288c) (Baker's yeast).